The chain runs to 508 residues: Light-independent protochlorophyllide reductase subunit B (508 aa).

Position 36 (D36) interacts with [4Fe-4S] cluster. Catalysis depends on D294, which acts as the Proton donor. A substrate-binding site is contributed by 429-430; sequence GM.

This sequence belongs to the ChlB/BchB/BchZ family. In terms of assembly, protochlorophyllide reductase is composed of three subunits; ChlL, ChlN and ChlB. Forms a heterotetramer of two ChlB and two ChlN subunits. Requires [4Fe-4S] cluster as cofactor.

The enzyme catalyses chlorophyllide a + oxidized 2[4Fe-4S]-[ferredoxin] + 2 ADP + 2 phosphate = protochlorophyllide a + reduced 2[4Fe-4S]-[ferredoxin] + 2 ATP + 2 H2O. It functions in the pathway porphyrin-containing compound metabolism; chlorophyll biosynthesis (light-independent). Component of the dark-operative protochlorophyllide reductase (DPOR) that uses Mg-ATP and reduced ferredoxin to reduce ring D of protochlorophyllide (Pchlide) to form chlorophyllide a (Chlide). This reaction is light-independent. The NB-protein (ChlN-ChlB) is the catalytic component of the complex. In Synechocystis sp. (strain ATCC 27184 / PCC 6803 / Kazusa), this protein is Light-independent protochlorophyllide reductase subunit B.